The following is a 660-amino-acid chain: Phosphatidylinositol-3-phosphate phosphatase MTMR7 (660 aa).

The Myotubularin phosphatase domain occupies 126–504; it reads GWVLIDLSEE…FMYKFWSGMY (379 aa). Positions 250, 275, and 276 each coordinate a 1,2-diacyl-sn-glycero-3-phospho-(1D-myo-inositol-3-phosphate). Cysteine 338 acts as the Phosphocysteine intermediate in catalysis. A 1,2-diacyl-sn-glycero-3-phospho-(1D-myo-inositol-3-phosphate) contacts are provided by serine 339, aspartate 340, glycine 341, tryptophan 342, aspartate 343, arginine 344, and arginine 384. The stretch at 521–551 forms a coiled coil; it reads LMAVKEETQQLEEELEALEERLEKIQKVQLN. Residues 554–660 form a disordered region; that stretch reads KVKSKQSEPS…DSDEAVFLTA (107 aa). Residues 566–596 are compositionally biased toward polar residues; sequence SGFSTSDNSIANTPQDYSGNMKSFPSRSPSQ. Threonine 578 is modified (phosphothreonine). Over residues 641–653 the composition is skewed to basic and acidic residues; it reads APSEDSGKDRDSD.

The protein belongs to the protein-tyrosine phosphatase family. Non-receptor class myotubularin subfamily. As to quaternary structure, heterodimer (via C-terminus) with MTMR9 (via coiled coil domain); the interaction enhances MTMR7 catalytic activity. Does not homodimerize. Interacts with RAB1B (in GDP-bound form). As to expression, expressed specifically in brain.

It localises to the cytoplasm. The protein resides in the endomembrane system. The catalysed reaction is a 1,2-diacyl-sn-glycero-3-phospho-(1D-myo-inositol-3-phosphate) + H2O = a 1,2-diacyl-sn-glycero-3-phospho-(1D-myo-inositol) + phosphate. The enzyme catalyses 1D-myo-inositol 1,3-bisphosphate + H2O = 1D-myo-inositol 1-phosphate + phosphate. Its activity is regulated as follows. Interaction with MTMR9 increases phosphatase activity. Functionally, lipid phosphatase that specifically dephosphorylates the D-3 position of phosphatidylinositol 3-phosphate (PtdIns(3)P) and inositol 1,3-bisphosphate (Ins(1,3)P2). This Homo sapiens (Human) protein is Phosphatidylinositol-3-phosphate phosphatase MTMR7.